Reading from the N-terminus, the 39-residue chain is Omega-theraphotoxin-Asp1g (39 aa).

Disulfide bonds link cysteine 4-cysteine 25, cysteine 8-cysteine 31, and cysteine 17-cysteine 36.

This sequence belongs to the neurotoxin 12 (Hwtx-2) family. 06 (TXP1) subfamily. Expressed by the venom gland.

The protein resides in the secreted. Functionally, inhibits voltage-gated calcium channels (Cav) in rat cerebellar granule cells. Has insecticidal activity. This chain is Omega-theraphotoxin-Asp1g, found in Aphonopelma sp. (American tarantula).